Reading from the N-terminus, the 205-residue chain is Protein GrpE (205 aa).

Residues Met-1–Pro-40 are disordered.

This sequence belongs to the GrpE family. In terms of assembly, homodimer.

It localises to the cytoplasm. Functionally, participates actively in the response to hyperosmotic and heat shock by preventing the aggregation of stress-denatured proteins, in association with DnaK and GrpE. It is the nucleotide exchange factor for DnaK and may function as a thermosensor. Unfolded proteins bind initially to DnaJ; upon interaction with the DnaJ-bound protein, DnaK hydrolyzes its bound ATP, resulting in the formation of a stable complex. GrpE releases ADP from DnaK; ATP binding to DnaK triggers the release of the substrate protein, thus completing the reaction cycle. Several rounds of ATP-dependent interactions between DnaJ, DnaK and GrpE are required for fully efficient folding. In Acidobacterium capsulatum (strain ATCC 51196 / DSM 11244 / BCRC 80197 / JCM 7670 / NBRC 15755 / NCIMB 13165 / 161), this protein is Protein GrpE.